Reading from the N-terminus, the 95-residue chain is Succinate dehydrogenase membrane anchor subunit (95 aa).

Residues 1 to 19 (MYKTLLAQVFFHSIAKKKL) lie on the Mitochondrial matrix side of the membrane. A helical transmembrane segment spans residues 20–40 (YFFWLPRLFSLLLVPGFLFDI). Glu41 is a topological domain (mitochondrial intermembrane). The helical transmembrane segment at 42–62 (ILFLFHPIILLHASLGLSVII) threads the bilayer. Heme is bound at residue His53. Residues 63-74 (EDYIHIETIKFQ) lie on the Mitochondrial matrix side of the membrane. Tyr65 contacts a ubiquinone. Residues 75 to 95 (YLSLIKLLLVLLINLNILYLL) form a helical membrane-spanning segment.

As to quaternary structure, part of an enzyme complex containing four subunits: a flavoprotein, an iron-sulfur protein, plus two membrane-anchoring proteins. Requires heme as cofactor.

It localises to the mitochondrion inner membrane. It participates in carbohydrate metabolism; tricarboxylic acid cycle. Membrane-anchoring subunit of succinate dehydrogenase (SDH). The sequence is that of Succinate dehydrogenase membrane anchor subunit (SDH4) from Porphyra purpurea (Red seaweed).